Here is a 463-residue protein sequence, read N- to C-terminus: Formate-nitrite transporter 2 (463 aa).

The Cytoplasmic segment spans residues 1–100 (MCSIPPLRLL…VKKTQLRIDR (100 aa)). A helical transmembrane segment spans residues 101 to 121 (LLLQAFMAGIFVAMAGHCCTV). Over 122 to 142 (LAGSYPTDPGDPLAVAKPTQK) the chain is Extracellular. A helical membrane pass occupies residues 143-163 (FIYGALFPVAFICIILTGAEL). Residues 164 to 189 (FTGNTMTMLICYFQKRVTMLQLGVNW) are Cytoplasmic-facing. Residues 190 to 210 (LGSLAGNWLGALFGAYFLSYL) form a helical membrane-spanning segment. Residues 211-237 (TGALGDEHVRQFLFRTCVNKISYGWGE) lie on the Extracellular side of the membrane. A helical transmembrane segment spans residues 238 to 258 (CFLRGVGCNTFVCLAVWAVIA). At 259–265 (SENVAGK) the chain is on the cytoplasmic side. A helical transmembrane segment spans residues 266–286 (VLVMWFPIVAFCVGGYEHIIA). The Extracellular segment spans residues 287 to 305 (NMYTLQAGLMAGAPVAILD). Residues 306-326 (VIAFNFLPTLLGNIVGGCLLV) traverse the membrane as a helical segment. Residues 327 to 463 (GAVYAYNFYP…QTAESVAQQV (137 aa)) are Cytoplasmic-facing. The disordered stretch occupies residues 424–463 (SGNLSTHARLDLPNRPVEPPSDGLEVTPQSQTAESVAQQV). Over residues 450–463 (TPQSQTAESVAQQV) the composition is skewed to polar residues.

The protein belongs to the FNT transporter (TC 1.A.16) family. As to quaternary structure, homopentamer.

The protein localises to the cell membrane. The enzyme catalyses (S)-lactate(in) + H(+)(in) = (S)-lactate(out) + H(+)(out). It carries out the reaction formate(in) + H(+)(in) = formate(out) + H(+)(out). It catalyses the reaction pyruvate(out) + H(+)(out) = pyruvate(in) + H(+)(in). The catalysed reaction is acetate(out) + H(+)(out) = acetate(in) + H(+)(in). Its activity is regulated as follows. Inhibited by p-chloromercuribenzene sulfonate (pCMBS). Methyl methanethiosulfonate (MMTS) inhibits L-lactate but not formate transport. Inhibited by the Malaria Box compound MMV007839. Inhibited by BH-296, BH-317, BH-326 and BH-388 compounds. In terms of biological role, monocarboxylate-proton symporter; active in acidic-to-neutral pH range. Transports L-lactate and formate. The chain is Formate-nitrite transporter 2 from Toxoplasma gondii (strain ATCC 50611 / Me49).